The following is a 633-amino-acid chain: Pentatricopeptide repeat-containing protein At1g43980, mitochondrial (633 aa).

The N-terminal 30 residues, 1–30 (MFQLLRRAHGLCMPSSLYFSRLVNRSLLSK), are a transit peptide targeting the mitochondrion. PPR repeat units lie at residues 50 to 80 (TTYW…IPDK), 81 to 111 (NTIT…MPER), 112 to 146 (DVVS…EIRP), 147 to 178 (TEFT…GVSR), 180 to 210 (NLVV…MEDR), 211 to 245 (DVVS…EIQP), 246 to 280 (DEYT…GFLS), 281 to 311 (NSIV…LEKW), 312 to 346 (DSVL…SVRP), 347 to 380 (DKFT…GFDL), 381 to 411 (DTAV…TDGK), 412 to 447 (DLIF…SLKP), 448 to 483 (DRVT…GVNP), and 484 to 514 (GNEH…IPFE). The tract at residues 519–594 (IWEPILCASL…AQGSSKISIE (76 aa)) is type E motif.

The protein belongs to the PPR family. PCMP-E subfamily.

It localises to the mitochondrion. The polypeptide is Pentatricopeptide repeat-containing protein At1g43980, mitochondrial (PCMP-E58) (Arabidopsis thaliana (Mouse-ear cress)).